The chain runs to 433 residues: 3-phosphoshikimate 1-carboxyvinyltransferase (433 aa).

The 3-phosphoshikimate site is built by K22, S23, and R27. K22 serves as a coordination point for phosphoenolpyruvate. The phosphoenolpyruvate site is built by G95 and R123. 3-phosphoshikimate contacts are provided by S167, Q169, D315, and K342. Q169 serves as a coordination point for phosphoenolpyruvate. D315 serves as the catalytic Proton acceptor. 2 residues coordinate phosphoenolpyruvate: R346 and R387.

This sequence belongs to the EPSP synthase family. As to quaternary structure, monomer.

The protein localises to the cytoplasm. The enzyme catalyses 3-phosphoshikimate + phosphoenolpyruvate = 5-O-(1-carboxyvinyl)-3-phosphoshikimate + phosphate. It participates in metabolic intermediate biosynthesis; chorismate biosynthesis; chorismate from D-erythrose 4-phosphate and phosphoenolpyruvate: step 6/7. In terms of biological role, catalyzes the transfer of the enolpyruvyl moiety of phosphoenolpyruvate (PEP) to the 5-hydroxyl of shikimate-3-phosphate (S3P) to produce enolpyruvyl shikimate-3-phosphate and inorganic phosphate. The sequence is that of 3-phosphoshikimate 1-carboxyvinyltransferase from Legionella pneumophila (strain Corby).